Here is a 319-residue protein sequence, read N- to C-terminus: Ferrochelatase (319 aa).

Residues H193 and E274 each coordinate Fe cation.

Belongs to the ferrochelatase family.

It is found in the cytoplasm. It carries out the reaction heme b + 2 H(+) = protoporphyrin IX + Fe(2+). It participates in porphyrin-containing compound metabolism; protoheme biosynthesis; protoheme from protoporphyrin-IX: step 1/1. Catalyzes the ferrous insertion into protoporphyrin IX. In Erwinia tasmaniensis (strain DSM 17950 / CFBP 7177 / CIP 109463 / NCPPB 4357 / Et1/99), this protein is Ferrochelatase.